We begin with the raw amino-acid sequence, 273 residues long: Ribosomal RNA small subunit methyltransferase A (273 aa).

6 residues coordinate S-adenosyl-L-methionine: N18, L20, G45, E66, D91, and N113.

This sequence belongs to the class I-like SAM-binding methyltransferase superfamily. rRNA adenine N(6)-methyltransferase family. RsmA subfamily.

It is found in the cytoplasm. The enzyme catalyses adenosine(1518)/adenosine(1519) in 16S rRNA + 4 S-adenosyl-L-methionine = N(6)-dimethyladenosine(1518)/N(6)-dimethyladenosine(1519) in 16S rRNA + 4 S-adenosyl-L-homocysteine + 4 H(+). Its function is as follows. Specifically dimethylates two adjacent adenosines (A1518 and A1519) in the loop of a conserved hairpin near the 3'-end of 16S rRNA in the 30S particle. May play a critical role in biogenesis of 30S subunits. The sequence is that of Ribosomal RNA small subunit methyltransferase A from Salmonella agona (strain SL483).